The following is a 368-amino-acid chain: MTDNVLKLSRKNIKKLIPYQSARRIGGEHGNILLNANESPVSIFFKLKKKPFNRYPECQPSKLISSYAHYVNLSCNQILATRGADEGIELLIKAFCEPGKDAIIYCPPTYDMYRINATIAGVEIKEIPTIKNTWQLDLLNIKLNLSRVKLIYICNPNNPTGNIFFKKDLIFLLNITLGQALVVIDEAYIEFSPEESMTNYLKDYPNLVVLRTLSKAFALAGIRCGFTLAKKEIIQTLSKVISPYPISIPVSDIAIRSLEKDYVQLMKNRVLDSNNNRIWLINQLKNITCVETVFESNANYVLVKFSMFEKVFETLWNKGIILRNQNEKTNLKKCIRISMGTRSESLRLIKELKIFSKKNMCQGEMSEK.

Residue Lys-215 is modified to N6-(pyridoxal phosphate)lysine.

It belongs to the class-II pyridoxal-phosphate-dependent aminotransferase family. Histidinol-phosphate aminotransferase subfamily. As to quaternary structure, homodimer. Requires pyridoxal 5'-phosphate as cofactor.

It catalyses the reaction L-histidinol phosphate + 2-oxoglutarate = 3-(imidazol-4-yl)-2-oxopropyl phosphate + L-glutamate. It functions in the pathway amino-acid biosynthesis; L-histidine biosynthesis; L-histidine from 5-phospho-alpha-D-ribose 1-diphosphate: step 7/9. This is Histidinol-phosphate aminotransferase (hisC) from Buchnera aphidicola subsp. Acyrthosiphon pisum (strain APS) (Acyrthosiphon pisum symbiotic bacterium).